The primary structure comprises 408 residues: Phosphoglycerate kinase (408 aa).

Substrate contacts are provided by residues 24–26 (DLN), Arg-39, 62–65 (HLGR), Arg-121, and Arg-161. Residues Lys-211, Gly-307, Glu-338, and 364 to 367 (GGDS) contribute to the ATP site.

It belongs to the phosphoglycerate kinase family. In terms of assembly, monomer.

It is found in the cytoplasm. The catalysed reaction is (2R)-3-phosphoglycerate + ATP = (2R)-3-phospho-glyceroyl phosphate + ADP. It functions in the pathway carbohydrate degradation; glycolysis; pyruvate from D-glyceraldehyde 3-phosphate: step 2/5. In Arthrobacter sp. (strain FB24), this protein is Phosphoglycerate kinase.